Consider the following 388-residue polypeptide: Na(+)/H(+) antiporter NhaA (388 aa).

Topologically, residues 1 to 11 (MKHLHRFFSSD) are cytoplasmic. Residues 12–31 (ASGGIILIIAAILAMIMANS) traverse the membrane as a helical segment. The Periplasmic portion of the chain corresponds to 32–58 (GATSGWYHDFLETPVQLRVGSLEINKN). Residues 59 to 80 (MLLWINDALMAVFFLLVGLEVK) traverse the membrane as a helical segment. The Cytoplasmic portion of the chain corresponds to 81 to 96 (RELMQGSLASLRQAAF). Residues 97 to 116 (PVIAAIGGMIVPALLYLAFN) form a helical membrane-spanning segment. The Periplasmic segment spans residues 117–122 (YADPIT). The helical transmembrane segment at 123-130 (REGWAIPA) threads the bilayer. Over 131 to 154 (ATDIAFALGVLALLGSRVPLALKI) the chain is Cytoplasmic. Residues 155–176 (FLMALAIIDDLGAIIIIALFYT) traverse the membrane as a helical segment. Residues 177–180 (NDLS) are Periplasmic-facing. Residues 181–200 (MASLGVAAVAIAVLAVLNLC) traverse the membrane as a helical segment. Residues 201–204 (GVRR) are Cytoplasmic-facing. The chain crosses the membrane as a helical span at residues 205–222 (TGVYILVGVVLWTAVLKS). A topological domain (periplasmic) is located at residue Gly223. The helical transmembrane segment at 224–236 (VHATLAGVIVGFF) threads the bilayer. Over 237–253 (IPLKEKHGRSPAKRLEH) the chain is Cytoplasmic. Residues 254 to 272 (VLHPWVAYLILPLFAFANA) traverse the membrane as a helical segment. The Periplasmic segment spans residues 273-286 (GVSLQGVTLDGLTS). The chain crosses the membrane as a helical span at residues 287–310 (ILPLGIIAGLLIGKPLGISLFCWL). The Cytoplasmic portion of the chain corresponds to 311-339 (ALRLKLAHLPEGTTYQQIMAVGILCGIGF). A helical membrane pass occupies residues 340-350 (TMSIFIASLAF). The Periplasmic portion of the chain corresponds to 351–357 (GSVDPEL). A helical transmembrane segment spans residues 358-380 (INWAKLGILVGSISSAVIGYSWL). Residues 381–388 (RVRLRPSV) are Cytoplasmic-facing.

This sequence belongs to the NhaA Na(+)/H(+) (TC 2.A.33) antiporter family.

The protein resides in the cell inner membrane. The catalysed reaction is Na(+)(in) + 2 H(+)(out) = Na(+)(out) + 2 H(+)(in). Na(+)/H(+) antiporter that extrudes sodium in exchange for external protons. The chain is Na(+)/H(+) antiporter NhaA from Escherichia coli O9:H4 (strain HS).